We begin with the raw amino-acid sequence, 178 residues long: Nicotinamide-nucleotide adenylyltransferase (178 aa).

The protein belongs to the archaeal NMN adenylyltransferase family.

The protein resides in the cytoplasm. It catalyses the reaction beta-nicotinamide D-ribonucleotide + ATP + H(+) = diphosphate + NAD(+). It participates in cofactor biosynthesis; NAD(+) biosynthesis; NAD(+) from nicotinamide D-ribonucleotide: step 1/1. In Pyrobaculum neutrophilum (strain DSM 2338 / JCM 9278 / NBRC 100436 / V24Sta) (Thermoproteus neutrophilus), this protein is Nicotinamide-nucleotide adenylyltransferase.